A 421-amino-acid polypeptide reads, in one-letter code: Serine hydroxymethyltransferase (421 aa).

(6S)-5,6,7,8-tetrahydrofolate contacts are provided by residues leucine 121 and 125 to 127 (GHL). Lysine 229 is modified (N6-(pyridoxal phosphate)lysine).

Belongs to the SHMT family. As to quaternary structure, homodimer. It depends on pyridoxal 5'-phosphate as a cofactor.

Its subcellular location is the cytoplasm. The catalysed reaction is (6R)-5,10-methylene-5,6,7,8-tetrahydrofolate + glycine + H2O = (6S)-5,6,7,8-tetrahydrofolate + L-serine. Its pathway is one-carbon metabolism; tetrahydrofolate interconversion. It participates in amino-acid biosynthesis; glycine biosynthesis; glycine from L-serine: step 1/1. Catalyzes the reversible interconversion of serine and glycine with tetrahydrofolate (THF) serving as the one-carbon carrier. This reaction serves as the major source of one-carbon groups required for the biosynthesis of purines, thymidylate, methionine, and other important biomolecules. Also exhibits THF-independent aldolase activity toward beta-hydroxyamino acids, producing glycine and aldehydes, via a retro-aldol mechanism. This is Serine hydroxymethyltransferase from Haemophilus influenzae (strain 86-028NP).